We begin with the raw amino-acid sequence, 640 residues long: Putative GTPase-activating protein C1620.12c (640 aa).

The disordered stretch occupies residues 96–120 (QPLQGHSPVPSFMSTASTNISSSKI). Low complexity predominate over residues 109 to 120 (STASTNISSSKI). The 194-residue stretch at 215–408 (CIPSPCRKLV…RLMDLIAIYG (194 aa)) folds into the Rab-GAP TBC domain. A coiled-coil region spans residues 500 to 636 (RQNNLEELKN…LQTKWKSVSE (137 aa)).

Belongs to the GYP5 family.

The protein resides in the nucleus. It localises to the cytoplasm. In Schizosaccharomyces pombe (strain 972 / ATCC 24843) (Fission yeast), this protein is Putative GTPase-activating protein C1620.12c.